Here is a 106-residue protein sequence, read N- to C-terminus: Small ribosomal subunit protein bS16 (106 aa).

Residues 84–106 (KREARNNPEKAVPRKERKAADGK) form a disordered region.

This Rhodopseudomonas palustris (strain ATCC BAA-98 / CGA009) protein is Small ribosomal subunit protein bS16.